Reading from the N-terminus, the 1092-residue chain is Isoleucine--tRNA ligase (1092 aa).

The 'HIGH' region motif lies at Pro53 to His63. Residues Lys613–Arg617 carry the 'KMSKS' region motif. Lys616 is a binding site for ATP.

Belongs to the class-I aminoacyl-tRNA synthetase family. IleS type 2 subfamily. Monomer. Zn(2+) serves as cofactor.

It localises to the cytoplasm. The enzyme catalyses tRNA(Ile) + L-isoleucine + ATP = L-isoleucyl-tRNA(Ile) + AMP + diphosphate. Catalyzes the attachment of isoleucine to tRNA(Ile). As IleRS can inadvertently accommodate and process structurally similar amino acids such as valine, to avoid such errors it has two additional distinct tRNA(Ile)-dependent editing activities. One activity is designated as 'pretransfer' editing and involves the hydrolysis of activated Val-AMP. The other activity is designated 'posttransfer' editing and involves deacylation of mischarged Val-tRNA(Ile). In Rickettsia peacockii (strain Rustic), this protein is Isoleucine--tRNA ligase.